Consider the following 169-residue polypeptide: Crossover junction endodeoxyribonuclease RuvC (169 aa).

Residues aspartate 11, glutamate 71, and aspartate 143 contribute to the active site. Residues aspartate 11, glutamate 71, and aspartate 143 each contribute to the Mg(2+) site.

This sequence belongs to the RuvC family. Homodimer which binds Holliday junction (HJ) DNA. The HJ becomes 2-fold symmetrical on binding to RuvC with unstacked arms; it has a different conformation from HJ DNA in complex with RuvA. In the full resolvosome a probable DNA-RuvA(4)-RuvB(12)-RuvC(2) complex forms which resolves the HJ. It depends on Mg(2+) as a cofactor.

It is found in the cytoplasm. The catalysed reaction is Endonucleolytic cleavage at a junction such as a reciprocal single-stranded crossover between two homologous DNA duplexes (Holliday junction).. In terms of biological role, the RuvA-RuvB-RuvC complex processes Holliday junction (HJ) DNA during genetic recombination and DNA repair. Endonuclease that resolves HJ intermediates. Cleaves cruciform DNA by making single-stranded nicks across the HJ at symmetrical positions within the homologous arms, yielding a 5'-phosphate and a 3'-hydroxyl group; requires a central core of homology in the junction. The consensus cleavage sequence is 5'-(A/T)TT(C/G)-3'. Cleavage occurs on the 3'-side of the TT dinucleotide at the point of strand exchange. HJ branch migration catalyzed by RuvA-RuvB allows RuvC to scan DNA until it finds its consensus sequence, where it cleaves and resolves the cruciform DNA. This chain is Crossover junction endodeoxyribonuclease RuvC, found in Rhizobium etli (strain CIAT 652).